Consider the following 325-residue polypeptide: Protein FAM50B (325 aa).

A2 is modified (N-acetylalanine). The interval 137–160 (RRAGNLGKNPDVDTSFLPDRDREE) is disordered.

It belongs to the FAM50 family.

In Macaca fascicularis (Crab-eating macaque), this protein is Protein FAM50B (FAM50B).